A 1022-amino-acid polypeptide reads, in one-letter code: ATPase MORC2B (1022 aa).

Residue alanine 2 is modified to N-acetylalanine. Residues asparagine 39, 87–89 (SAK), and 99–105 (RYGNGLK) contribute to the ATP site. Mg(2+) is bound at residue asparagine 39. Residues 285-362 (KTRAEQEVKK…RDAKQQALKE (78 aa)) adopt a coiled-coil conformation. Lysine 427 lines the ATP pocket. The CW-type zinc-finger motif lies at 490–544 (AMQVPTTIQCDLCLKWRTLPFQLSAVEEGYPINWVCSMNPDPEQDQCEAFELKQK). Zn(2+) contacts are provided by cysteine 499, cysteine 502, cysteine 525, and cysteine 536. Positions 555-583 (KTQEERQKQLTEKIQQEQRKLKALKKIKP) form a coiled coil. Residue serine 615 is modified to Phosphoserine. Residue lysine 649 forms a Glycyl lysine isopeptide (Lys-Gly) (interchain with G-Cter in SUMO2) linkage. A phosphoserine mark is found at serine 690, serine 724, serine 733, and serine 737. Lysine 758 is covalently cross-linked (Glycyl lysine isopeptide (Lys-Gly) (interchain with G-Cter in SUMO2)). Phosphoserine is present on residues serine 768 and serine 770. Threonine 827 is modified (phosphothreonine). Phosphoserine occurs at positions 846 and 851. Residue lysine 922 forms a Glycyl lysine isopeptide (Lys-Gly) (interchain with G-Cter in SUMO2) linkage. Residues 962-1001 (QAKVSEESLRISQKKLQETEEKLQKLRTNIQTLLQMAQQG) adopt a coiled-coil conformation.

Interacts with Morc2a. In terms of tissue distribution, protein is abundant in testes but not detected in other adult tissues examined (at protein level). Detected in germ cells with a distinct developmental-specific expression pattern but not in somatic cells such as Sertoli cells.

Its subcellular location is the nucleus. It carries out the reaction ATP + H2O = ADP + phosphate + H(+). Functionally, required for chromosomal synapsis and meiotic recombination in males and females. This is ATPase MORC2B from Mus musculus (Mouse).